The sequence spans 249 residues: Leucyl/phenylalanyl-tRNA--protein transferase (249 aa).

The tract at residues 1 to 21 (MSRTLPHLLSPDPASPFPPAE) is disordered.

It belongs to the L/F-transferase family.

Its subcellular location is the cytoplasm. It catalyses the reaction N-terminal L-lysyl-[protein] + L-leucyl-tRNA(Leu) = N-terminal L-leucyl-L-lysyl-[protein] + tRNA(Leu) + H(+). It carries out the reaction N-terminal L-arginyl-[protein] + L-leucyl-tRNA(Leu) = N-terminal L-leucyl-L-arginyl-[protein] + tRNA(Leu) + H(+). The enzyme catalyses L-phenylalanyl-tRNA(Phe) + an N-terminal L-alpha-aminoacyl-[protein] = an N-terminal L-phenylalanyl-L-alpha-aminoacyl-[protein] + tRNA(Phe). Its function is as follows. Functions in the N-end rule pathway of protein degradation where it conjugates Leu, Phe and, less efficiently, Met from aminoacyl-tRNAs to the N-termini of proteins containing an N-terminal arginine or lysine. The chain is Leucyl/phenylalanyl-tRNA--protein transferase from Xanthomonas campestris pv. campestris (strain B100).